Reading from the N-terminus, the 518-residue chain is Beta-TrCP (518 aa).

Residues 1-12 are compositionally biased toward polar residues; the sequence is MEGFSCSLQPPT. The tract at residues 1 to 24 is disordered; that stretch reads MEGFSCSLQPPTASEREDCNRDEP. The segment covering 14 to 24 has biased composition (basic and acidic residues); it reads SEREDCNRDEP. The F-box domain occupies 119 to 157; it reads DHIAENILSYLDAKSLCSAELVCKEWYRVTSDGMLWKKL. 7 WD repeats span residues 230 to 258, 270 to 298, 310 to 338, 353 to 381, 393 to 421, 433 to 461, and 482 to 510; these read ETSK…KIWD, GHTG…RVWD, HHCE…AVWD, GHRA…KVWN, GHKR…RLWD, GHEE…KVWD, and EHSG…LIWD.

In terms of assembly, part of a SCF (SKP1-cullin-F-box) ubiquitin-protein ligase complex. Interacts with fbxo5.

Its function is as follows. Substrate recognition component of a SCF (SKP1-CUL1-F-box protein) E3 ubiquitin-protein ligase complex which mediates the ubiquitination and subsequent proteasomal degradation of target proteins. Probably recognizes and binds to phosphorylated target proteins. May participate in Wnt signaling. The sequence is that of Beta-TrCP (fbxw1) from Xenopus laevis (African clawed frog).